We begin with the raw amino-acid sequence, 379 residues long: Homoserine O-succinyltransferase (379 aa).

The AB hydrolase-1 domain maps to 48 to 357 (NAVLICHALS…SAHGHDAFLM (310 aa)). The active-site Nucleophile is the Ser154. Arg224 serves as a coordination point for substrate. Residues Asp319 and His352 contribute to the active site. Residue Asp353 coordinates substrate.

The protein belongs to the AB hydrolase superfamily. MetX family. Homodimer.

It localises to the cytoplasm. The catalysed reaction is L-homoserine + succinyl-CoA = O-succinyl-L-homoserine + CoA. Its pathway is amino-acid biosynthesis; L-methionine biosynthesis via de novo pathway; O-succinyl-L-homoserine from L-homoserine: step 1/1. Its function is as follows. Transfers a succinyl group from succinyl-CoA to L-homoserine, forming succinyl-L-homoserine. In Neisseria gonorrhoeae (strain ATCC 700825 / FA 1090), this protein is Homoserine O-succinyltransferase.